The sequence spans 436 residues: GTPase Der (436 aa).

2 consecutive EngA-type G domains span residues 4–167 (PTIA…PNEY) and 175–351 (IKFS…ESQN). GTP contacts are provided by residues 10–17 (GRPNVGKS), 57–61 (DTGGI), 119–122 (NKVD), 181–188 (GRPNVGKS), 229–233 (DTAGM), and 294–297 (NKWD). The region spanning 352–436 (TRIPSAVLND…PIHLIARKRK (85 aa)) is the KH-like domain.

Belongs to the TRAFAC class TrmE-Era-EngA-EngB-Septin-like GTPase superfamily. EngA (Der) GTPase family. Associates with the 50S ribosomal subunit.

In terms of biological role, GTPase that plays an essential role in the late steps of ribosome biogenesis. This Streptococcus pneumoniae (strain JJA) protein is GTPase Der.